Consider the following 158-residue polypeptide: Putative pre-16S rRNA nuclease (158 aa).

The disordered stretch occupies residues 138-158; sequence ELKPAQQTASRSGAGAGDGGS.

Belongs to the YqgF nuclease family.

Its subcellular location is the cytoplasm. In terms of biological role, could be a nuclease involved in processing of the 5'-end of pre-16S rRNA. The chain is Putative pre-16S rRNA nuclease from Synechococcus sp. (strain CC9605).